Consider the following 423-residue polypeptide: Gamma-glutamyl phosphate reductase (423 aa).

Low complexity predominate over residues 1 to 14 (MTLQAAPRSAAAQQ). A disordered region spans residues 1 to 25 (MTLQAAPRSAAAQQREPDLRQEVHD). Basic and acidic residues predominate over residues 15-25 (REPDLRQEVHD).

Belongs to the gamma-glutamyl phosphate reductase family.

The protein resides in the cytoplasm. The catalysed reaction is L-glutamate 5-semialdehyde + phosphate + NADP(+) = L-glutamyl 5-phosphate + NADPH + H(+). It functions in the pathway amino-acid biosynthesis; L-proline biosynthesis; L-glutamate 5-semialdehyde from L-glutamate: step 2/2. In terms of biological role, catalyzes the NADPH-dependent reduction of L-glutamate 5-phosphate into L-glutamate 5-semialdehyde and phosphate. The product spontaneously undergoes cyclization to form 1-pyrroline-5-carboxylate. This is Gamma-glutamyl phosphate reductase from Mycobacterium marinum (strain ATCC BAA-535 / M).